A 307-amino-acid chain; its full sequence is Olfactory receptor 5M3 (307 aa).

Residues 1–23 are Extracellular-facing; it reads MLNFTDVTEFILLGLTSRREWQV. N-linked (GlcNAc...) asparagine glycosylation is present at asparagine 3. A helical membrane pass occupies residues 24 to 44; the sequence is LFFIIFLVVYIITMVGNIGMM. Over 45-52 the chain is Cytoplasmic; sequence VLIKVSPQ. Residues 53–73 form a helical membrane-spanning segment; it reads LNNPMYFFLSHLSFVDVWFSS. Residues 74–97 are Extracellular-facing; the sequence is NVTPKMLENLLSDKKTITYAGCLV. An intrachain disulfide couples cysteine 95 to cysteine 187. Residues 98-118 form a helical membrane-spanning segment; it reads QCFFFIALVHVEIFILAAMAF. The Cytoplasmic segment spans residues 119 to 137; that stretch reads DRYMAIGNPLLYGSKMSRV. Residues 138–158 traverse the membrane as a helical segment; it reads VCIRLITFPYIYGFLTSLAAT. Topologically, residues 159–194 are extracellular; sequence LWTYGLYFCGKIEINHFYCADPPLIKMACAGTFVKE. The helical transmembrane segment at 195–215 threads the bilayer; the sequence is YTMIILAGINFTYSLTVIIIS. At 216 to 235 the chain is on the cytoplasmic side; that stretch reads YLFILIAILRMRSAEGRQKA. A helical transmembrane segment spans residues 236 to 256; it reads FSTCGSHLTAVIIFYGTLIFM. Residues 257 to 269 are Extracellular-facing; it reads YLRRPTEESVEQG. The chain crosses the membrane as a helical span at residues 270–290; it reads KMVAVFYTTVIPMLNPMIYSL. The Cytoplasmic portion of the chain corresponds to 291-307; it reads RNKDVKKAMMKVISRSC.

This sequence belongs to the G-protein coupled receptor 1 family.

It is found in the cell membrane. In terms of biological role, odorant receptor. The polypeptide is Olfactory receptor 5M3 (OR5M3) (Homo sapiens (Human)).